A 128-amino-acid polypeptide reads, in one-letter code: Ribosome-binding factor A (128 aa).

It belongs to the RbfA family. Monomer. Binds 30S ribosomal subunits, but not 50S ribosomal subunits or 70S ribosomes.

It is found in the cytoplasm. In terms of biological role, one of several proteins that assist in the late maturation steps of the functional core of the 30S ribosomal subunit. Associates with free 30S ribosomal subunits (but not with 30S subunits that are part of 70S ribosomes or polysomes). Required for efficient processing of 16S rRNA. May interact with the 5'-terminal helix region of 16S rRNA. In Rippkaea orientalis (strain PCC 8801 / RF-1) (Cyanothece sp. (strain PCC 8801)), this protein is Ribosome-binding factor A.